A 348-amino-acid chain; its full sequence is S-adenosylmethionine-dependent nucleotide dehydratase RSAD2 (348 aa).

The 221-residue stretch at 56–276 folds into the Radical SAM core domain; that stretch reads SATPSSVNYH…LERHSSISCL (221 aa). Positions 70, 74, and 77 each coordinate [4Fe-4S] cluster.

The protein belongs to the radical SAM superfamily. RSAD2 family. [4Fe-4S] cluster serves as cofactor. In terms of tissue distribution, expressed at low levels in spleen and head kidney.

It localises to the endoplasmic reticulum membrane. In terms of biological role, interferon-inducible iron-sulfur (4FE-4S) cluster-binding antiviral protein which plays a major role in the cell antiviral state induced by type I and type II interferon. This chain is S-adenosylmethionine-dependent nucleotide dehydratase RSAD2, found in Oncorhynchus mykiss (Rainbow trout).